A 315-amino-acid chain; its full sequence is Protein LST8 homolog (315 aa).

WD repeat units follow at residues 1–31 (MGDQLILATGGYDHTIKVWQAHTGNCIKTMR), 33–71 (VETSQVNALDRTPDKTRLAACGYQCIRLYDLESNCTAPV), 76–115 (GVQKNVTRLGFQEDGNWMFTAGEDHHVRIWDMISAPPHCS), 119–158 (DCESPVNAACLHPNQVEIGMGSQNGNVFLWDVKSEKHECI), 161–200 (EVDASIQDVAISPDGHYLAAANNKGNCYIWSLCSSPDQKM), 211–250 (AHTRYILRCKFSPDSRLLLTTSGDGTACLWKTSDFSKWRE), 253–292 (IENYWVWDAAFSADSKWLFTASSDGVARLWKLETKTPTRE), and 295–315 (GHTKAITALSFKDEIIRKVNH).

Belongs to the WD repeat LST8 family.

It localises to the cytoplasm. This is Protein LST8 homolog from Drosophila pseudoobscura pseudoobscura (Fruit fly).